The primary structure comprises 137 residues: Large ribosomal subunit protein uL16 (137 aa).

The segment at 1 to 20 (MLQPKRTKFRKQQKMRNRGL) is disordered.

It belongs to the universal ribosomal protein uL16 family. In terms of assembly, part of the 50S ribosomal subunit.

Functionally, binds 23S rRNA and is also seen to make contacts with the A and possibly P site tRNAs. This chain is Large ribosomal subunit protein uL16, found in Francisella philomiragia subsp. philomiragia (strain ATCC 25017 / CCUG 19701 / FSC 153 / O#319-036).